A 270-amino-acid polypeptide reads, in one-letter code: 4-hydroxy-tetrahydrodipicolinate reductase (270 aa).

Residues 11-16 (GCNGRM) and Glu37 each bind NAD(+). Arg38 contributes to the NADP(+) binding site. Residues 101 to 103 (GTT) and 125 to 128 (ASNY) contribute to the NAD(+) site. Residue His158 is the Proton donor/acceptor of the active site. His159 provides a ligand contact to (S)-2,3,4,5-tetrahydrodipicolinate. Lys162 acts as the Proton donor in catalysis. 168–169 (GT) is a binding site for (S)-2,3,4,5-tetrahydrodipicolinate.

It belongs to the DapB family.

The protein resides in the cytoplasm. It catalyses the reaction (S)-2,3,4,5-tetrahydrodipicolinate + NAD(+) + H2O = (2S,4S)-4-hydroxy-2,3,4,5-tetrahydrodipicolinate + NADH + H(+). The catalysed reaction is (S)-2,3,4,5-tetrahydrodipicolinate + NADP(+) + H2O = (2S,4S)-4-hydroxy-2,3,4,5-tetrahydrodipicolinate + NADPH + H(+). It functions in the pathway amino-acid biosynthesis; L-lysine biosynthesis via DAP pathway; (S)-tetrahydrodipicolinate from L-aspartate: step 4/4. Its function is as follows. Catalyzes the conversion of 4-hydroxy-tetrahydrodipicolinate (HTPA) to tetrahydrodipicolinate. The sequence is that of 4-hydroxy-tetrahydrodipicolinate reductase from Aeromonas salmonicida (strain A449).